We begin with the raw amino-acid sequence, 137 residues long: Small ribosomal subunit protein uS19 (137 aa).

This sequence belongs to the universal ribosomal protein uS19 family.

In terms of biological role, protein S19 forms a complex with S13 that binds strongly to the 16S ribosomal RNA. This chain is Small ribosomal subunit protein uS19, found in Methanospirillum hungatei JF-1 (strain ATCC 27890 / DSM 864 / NBRC 100397 / JF-1).